The chain runs to 480 residues: tRNA-2-methylthio-N(6)-dimethylallyladenosine synthase (480 aa).

The region spanning 3 to 120 (KKLYIKTWGC…LPEMLNQLQH (118 aa)) is the MTTase N-terminal domain. The [4Fe-4S] cluster site is built by Cys12, Cys49, Cys83, Cys157, Cys161, and Cys164. In terms of domain architecture, Radical SAM core spans 143–375 (KADGASAFVS…QEQITHQALR (233 aa)). The TRAM domain maps to 378 to 441 (RQMLNTEQRV…ANSLRGELVR (64 aa)).

Belongs to the methylthiotransferase family. MiaB subfamily. Monomer. [4Fe-4S] cluster serves as cofactor.

It localises to the cytoplasm. The enzyme catalyses N(6)-dimethylallyladenosine(37) in tRNA + (sulfur carrier)-SH + AH2 + 2 S-adenosyl-L-methionine = 2-methylsulfanyl-N(6)-dimethylallyladenosine(37) in tRNA + (sulfur carrier)-H + 5'-deoxyadenosine + L-methionine + A + S-adenosyl-L-homocysteine + 2 H(+). Functionally, catalyzes the methylthiolation of N6-(dimethylallyl)adenosine (i(6)A), leading to the formation of 2-methylthio-N6-(dimethylallyl)adenosine (ms(2)i(6)A) at position 37 in tRNAs that read codons beginning with uridine. This is tRNA-2-methylthio-N(6)-dimethylallyladenosine synthase from Colwellia psychrerythraea (strain 34H / ATCC BAA-681) (Vibrio psychroerythus).